A 111-amino-acid chain; its full sequence is Phosphoribosyl-AMP cyclohydrolase (111 aa).

A Mg(2+)-binding site is contributed by Asp80. Zn(2+) is bound at residue Cys81. Mg(2+) contacts are provided by Asp82 and Asp84. The Zn(2+) site is built by Cys97 and Cys104.

This sequence belongs to the PRA-CH family. In terms of assembly, homodimer. Mg(2+) is required as a cofactor. It depends on Zn(2+) as a cofactor.

Its subcellular location is the cytoplasm. It carries out the reaction 1-(5-phospho-beta-D-ribosyl)-5'-AMP + H2O = 1-(5-phospho-beta-D-ribosyl)-5-[(5-phospho-beta-D-ribosylamino)methylideneamino]imidazole-4-carboxamide. Its pathway is amino-acid biosynthesis; L-histidine biosynthesis; L-histidine from 5-phospho-alpha-D-ribose 1-diphosphate: step 3/9. In terms of biological role, catalyzes the hydrolysis of the adenine ring of phosphoribosyl-AMP. The polypeptide is Phosphoribosyl-AMP cyclohydrolase (Mycobacterium ulcerans (strain Agy99)).